We begin with the raw amino-acid sequence, 161 residues long: Probable chemoreceptor glutamine deamidase CheD (161 aa).

It belongs to the CheD family.

It catalyses the reaction L-glutaminyl-[protein] + H2O = L-glutamyl-[protein] + NH4(+). Functionally, probably deamidates glutamine residues to glutamate on methyl-accepting chemotaxis receptors (MCPs), playing an important role in chemotaxis. The chain is Probable chemoreceptor glutamine deamidase CheD from Syntrophomonas wolfei subsp. wolfei (strain DSM 2245B / Goettingen).